We begin with the raw amino-acid sequence, 548 residues long: Glycosyl hydrolase family 109 protein 3 (548 aa).

The N-terminal stretch at 1–21 (MKLKKLLLSVLMLLSISGLQA) is a signal peptide. Residues 71–72 (MR), D93, 141–144 (WNHH), 161–162 (EV), and N190 each bind NAD(+). Y219 is a binding site for substrate. 240 to 244 (DNLHW) is an NAD(+) binding site. Substrate contacts are provided by residues R245, 257 to 260 (YATH), and Y335. NAD(+) is bound at residue Y257.

Belongs to the Gfo/Idh/MocA family. Glycosyl hydrolase 109 subfamily. It depends on NAD(+) as a cofactor.

Glycosidase. The chain is Glycosyl hydrolase family 109 protein 3 from Phocaeicola vulgatus (strain ATCC 8482 / DSM 1447 / JCM 5826 / CCUG 4940 / NBRC 14291 / NCTC 11154) (Bacteroides vulgatus).